The chain runs to 206 residues: Glutathione S-transferase class-mu 28 kDa isozyme (206 aa).

A GST N-terminal domain is found at Val1–Gly81. Glutathione contacts are provided by residues Tyr5, Tyr5–Phe6, Arg11, Trp36–Lys40, Leu48, Ile50–Val51, and Glu65–Ser66. A GST C-terminal domain is found at Thr83–Phe206.

It belongs to the GST superfamily. Mu family. Homodimer.

It catalyses the reaction RX + glutathione = an S-substituted glutathione + a halide anion + H(+). Conjugation of reduced glutathione to a wide number of exogenous and endogenous hydrophobic electrophiles. Its function is as follows. GST isoenzymes appear to play a central role in the parasite detoxification system. Other functions are also suspected including a role in increasing the solubility of haematin in the parasite gut. The polypeptide is Glutathione S-transferase class-mu 28 kDa isozyme (Schistosoma japonicum (Blood fluke)).